A 414-amino-acid chain; its full sequence is Peptide chain release factor subunit 1 (414 aa).

The protein belongs to the eukaryotic release factor 1 family. As to quaternary structure, heterodimer of two subunits, one of which binds GTP.

The protein resides in the cytoplasm. Its function is as follows. Directs the termination of nascent peptide synthesis (translation) in response to the termination codons UAA, UAG and UGA. The protein is Peptide chain release factor subunit 1 (prf1) of Pyrococcus abyssi (strain GE5 / Orsay).